A 388-amino-acid polypeptide reads, in one-letter code: Ribonuclease D (388 aa).

The region spanning 7–173 (ITDSKTLAQF…QIFPKMLEEL (167 aa)) is the 3'-5' exonuclease domain. Positions 212–293 (KADVLGRLKA…ASHAPLAKEE (82 aa)) constitute an HRDC domain.

Belongs to the RNase D family. The cofactor is a divalent metal cation.

Its subcellular location is the cytoplasm. The catalysed reaction is Exonucleolytic cleavage that removes extra residues from the 3'-terminus of tRNA to produce 5'-mononucleotides.. In terms of biological role, exonuclease involved in the 3' processing of various precursor tRNAs. Initiates hydrolysis at the 3'-terminus of an RNA molecule and releases 5'-mononucleotides. In Sphingobium indicum (strain DSM 16413 / CCM 7287 / MTCC 6362 / UT26 / NBRC 101211 / UT26S) (Sphingobium japonicum), this protein is Ribonuclease D.